Reading from the N-terminus, the 404-residue chain is Argininosuccinate synthase (404 aa).

ATP contacts are provided by residues Ala-10–Ser-18 and Ala-38. Tyr-89 lines the L-citrulline pocket. Gly-119 contributes to the ATP binding site. Positions 121, 125, and 126 each coordinate L-aspartate. Asn-125 contacts L-citrulline. The L-citrulline site is built by Arg-129, Ser-177, Ser-186, Glu-262, and Tyr-274.

This sequence belongs to the argininosuccinate synthase family. Type 1 subfamily. Homotetramer.

The protein localises to the cytoplasm. It catalyses the reaction L-citrulline + L-aspartate + ATP = 2-(N(omega)-L-arginino)succinate + AMP + diphosphate + H(+). Its pathway is amino-acid biosynthesis; L-arginine biosynthesis; L-arginine from L-ornithine and carbamoyl phosphate: step 2/3. The sequence is that of Argininosuccinate synthase from Prochlorococcus marinus (strain MIT 9301).